A 244-amino-acid polypeptide reads, in one-letter code: Claudin-12 (244 aa).

Residues 1–10 lie on the Cytoplasmic side of the membrane; sequence MGCRDVHAAT. Residues 11–31 form a helical membrane-spanning segment; sequence VLSFLCGIASVAGLFAGTLLP. The Extracellular segment spans residues 32–87; sequence NWRKLRLITFNRNEKNLTIYTGLWVKCARYDGSSDCLMYDRTWYLSVDQLDLRVLQ. A helical transmembrane segment spans residues 88-108; sequence FALPLSIVIAMGALLLCLIGM. The Cytoplasmic portion of the chain corresponds to 109 to 135; that stretch reads CNTAFNSSVPNIKLAKCLVNSAGCHLV. Residues 136 to 156 form a helical membrane-spanning segment; the sequence is AGLLFFLAGTVSLSPSIWAIF. At 157–174 the chain is on the extracellular side; sequence YNSHLNRKFEPVFTFDYA. A helical transmembrane segment spans residues 175–195; sequence VFVTIASSGGLFMTALLLFVW. At 196–244 the chain is on the cytoplasmic side; the sequence is YCACKSLSSPFWQPLYSHAPGMHTYSQPYSSRSRLSAIEIDIPVVSHST. Phosphoserine occurs at positions 228 and 231.

Belongs to the claudin family. Interacts with OCLN.

The protein localises to the cell junction. Its subcellular location is the tight junction. It is found in the cell membrane. Plays a major role in tight junction-specific obliteration of the intercellular space, through calcium-independent cell-adhesion activity. This Mus musculus (Mouse) protein is Claudin-12 (Cldn12).